Here is a 660-residue protein sequence, read N- to C-terminus: Acetyl-coenzyme A synthetase (660 aa).

CoA contacts are provided by residues arginine 197–lysine 200 and threonine 317. Residues glycine 397–proline 399, aspartate 421–threonine 426, aspartate 512, and arginine 528 contribute to the ATP site. CoA is bound at residue serine 536. Arginine 539 is an ATP binding site. 2 residues coordinate Mg(2+): valine 550 and valine 555. Lysine 625 is subject to N6-acetyllysine.

The protein belongs to the ATP-dependent AMP-binding enzyme family. The cofactor is Mg(2+). In terms of processing, acetylated. Deacetylation by the SIR2-homolog deacetylase activates the enzyme.

The catalysed reaction is acetate + ATP + CoA = acetyl-CoA + AMP + diphosphate. In terms of biological role, catalyzes the conversion of acetate into acetyl-CoA (AcCoA), an essential intermediate at the junction of anabolic and catabolic pathways. AcsA undergoes a two-step reaction. In the first half reaction, AcsA combines acetate with ATP to form acetyl-adenylate (AcAMP) intermediate. In the second half reaction, it can then transfer the acetyl group from AcAMP to the sulfhydryl group of CoA, forming the product AcCoA. The polypeptide is Acetyl-coenzyme A synthetase (Paraburkholderia phymatum (strain DSM 17167 / CIP 108236 / LMG 21445 / STM815) (Burkholderia phymatum)).